Here is a 261-residue protein sequence, read N- to C-terminus: (S)-ureidoglycine aminohydrolase (261 aa).

The Cupin type-2 domain occupies 184 to 230 (LSFAPGASHGYIETHVQEHGAYILSGQGVYNLDNNWIPVKKGDYIFM). Positions 196, 198, 202, and 236 each coordinate Mn(2+). E196 is a binding site for substrate. Residues Q236, Y249, and K253 each contribute to the substrate site.

This sequence belongs to the UGHY family. Monomer. Mn(2+) serves as cofactor.

The protein resides in the cytoplasm. The catalysed reaction is (S)-2-ureidoglycine + H2O = (S)-ureidoglycolate + NH4(+). Involved in the anaerobic nitrogen utilization via the assimilation of allantoin. Catalyzes the second stereospecific hydrolysis reaction (deamination) of the allantoin degradation pathway, producing S-ureidoglycolate and ammonia from S-ureidoglycine. The sequence is that of (S)-ureidoglycine aminohydrolase (allE) from Escherichia coli (strain K12).